We begin with the raw amino-acid sequence, 382 residues long: uncharacterized protein (382 aa).

Helical transmembrane passes span 14 to 34 (GLLL…LWLA), 45 to 65 (MVSS…GYLI), 75 to 95 (YLAS…VGFW), 102 to 122 (FIAG…LMCS), 131 to 151 (LLAA…LLVS), 157 to 177 (LLHV…PLLF), 204 to 224 (LGVN…GLMP), 231 to 251 (GMAN…GILG), 270 to 290 (VQVF…AMAP), 291 to 311 (ALFI…AWAC), 325 to 345 (ALLL…AMLM), and 349 to 369 (SDNL…LMLL).

The protein belongs to the major facilitator superfamily. YcaD (TC 2.A.1.26) family.

The protein resides in the cell inner membrane. This is an uncharacterized protein from Salmonella paratyphi A (strain ATCC 9150 / SARB42).